The chain runs to 195 residues: HTH-type transcriptional regulator BetI (195 aa).

The region spanning serine 8–leucine 68 is the HTH tetR-type domain. A DNA-binding region (H-T-H motif) is located at residues threonine 31–phenylalanine 50.

It functions in the pathway amine and polyamine biosynthesis; betaine biosynthesis via choline pathway [regulation]. Repressor involved in the biosynthesis of the osmoprotectant glycine betaine. It represses transcription of the choline transporter BetT and the genes of BetAB involved in the synthesis of glycine betaine. In Escherichia coli O157:H7, this protein is HTH-type transcriptional regulator BetI.